Consider the following 619-residue polypeptide: Sodium-dependent dopamine transporter (619 aa).

Residues 1-56 (MSKSKCSVGPMSSVVAPAKEPNAVGPREVELILVKEQNGVQLTNSTLINPPQTPVE) are Cytoplasmic-facing. Residues 57–95 (VQERETWSKKIDFLLSVIGFAVDLANVWRFPYLCYKNGG) form a discontinuously helical membrane-spanning segment. 5 residues coordinate Na(+): G75, A77, V78, D79, and N82. Residue D79 coordinates dopamine. The next 2 helical transmembrane spans lie at 96–127 (GAFL…NREG) and 128–171 (AAGV…FSSF). Dopamine-binding residues include S149 and G153. Residues 172 to 235 (TMDLPWIHCN…SRGIDDLGPP (64 aa)) are Extracellular-facing. C180 and C189 are joined by a disulfide. 4 N-linked (GlcNAc...) asparagine glycosylation sites follow: N181, N188, N196, and N204. The next 2 membrane-spanning stretches (helical) occupy residues 236-255 (RWQL…FSLW) and 256-286 (KGVK…GVTL). Residues 287 to 305 (PGAMDGIRAYLSVDFYRLC) lie on the Extracellular side of the membrane. Residues 306 to 334 (EASVWIDAATQVCFSLGVGFGVLIAFSSY) traverse the membrane as a discontinuously helical segment. Q316 is a chloride binding site. F319 contributes to the dopamine binding site. Residues S320 and N352 each contribute to the Na(+) site. S320 serves as a coordination point for chloride. Residues 335-375 (NKFTNNCYRDAIITTSINSLTSFSSGFVVFSFLGYMAQKHN) form a helical membrane-spanning segment. S356 contacts chloride. Topologically, residues 376-399 (VPIRDVATDGPGLIFIIYPEAIAT) are extracellular. The next 3 helical transmembrane spans lie at 400–441 (LPLS…QLLH), 442–465 (RHRE…CVTN), and 466–498 (GGIY…AWFY). Positions 417, 420, and 421 each coordinate Na(+). The dopamine site is built by S421 and A422. Residues 499–515 (GVQQFSDDIKQMTGQRP) are Cytoplasmic-facing. The chain crosses the membrane as a helical span at residues 516-541 (NLYWRLCWKLVSPCFLLYVVVVSIVT). At 542–552 (FRPPHYGAYIF) the chain is on the extracellular side. A helical transmembrane segment spans residues 553-582 (PDWANALGWIIATSSMAMVPIYATYKFCSL). An interaction with TGFB1I1 region spans residues 560–589 (GWIIATSSMAMVPIYATYKFCSLPGSFREK). Topologically, residues 583-619 (PGSFREKLAYAITPEKDRQLVDRGEVRQFTLRHWLLV) are cytoplasmic.

This sequence belongs to the sodium:neurotransmitter symporter (SNF) (TC 2.A.22) family. SLC6A3 subfamily. In terms of assembly, monomer. Homooligomer; disulfide-linked. Interacts with PRKCABP and TGFB1I1. Interacts (via N-terminus) with SYNGR3 (via N-terminus). Interacts with SLC18A2. Interacts with TOR1A (ATP-bound); TOR1A regulates SLC6A3 subcellular location. Interacts with alpha-synuclein/SNCA. Interacts with SEPTIN4. Found in the substantia nigra and ventral tegmental dopamine neurons, in fibers of the medial forebrain bundle ascending into the striatum, and within dense fiber networks and varicosities in the dorsal and ventral striatum (at protein level). Lower expression in the cortex (at protein level). Absent from the corpus callosum. Expressed throughout the retina at postnatal day 8.

Its subcellular location is the cell membrane. The protein localises to the cell projection. It is found in the neuron projection. The protein resides in the axon. The enzyme catalyses dopamine(out) + chloride(out) + Na(+)(out) = dopamine(in) + chloride(in) + Na(+)(in). The catalysed reaction is (R)-noradrenaline(out) + chloride(out) + Na(+)(out) = (R)-noradrenaline(in) + chloride(in) + Na(+)(in). It catalyses the reaction dopamine(out) + chloride(out) + 2 Na(+)(out) = dopamine(in) + chloride(in) + 2 Na(+)(in). Its activity is regulated as follows. Inhibited by amphetamine, bupropion, cocaine and ritalin. Inhibited by zinc ions. In terms of biological role, mediates sodium- and chloride-dependent transport of dopamine. Also mediates sodium- and chloride-dependent transport of norepinephrine (also known as noradrenaline). Regulator of light-dependent retinal hyaloid vessel regression, downstream of OPN5 signaling. This is Sodium-dependent dopamine transporter (Slc6a3) from Mus musculus (Mouse).